A 261-amino-acid polypeptide reads, in one-letter code: Thiamine thiazole synthase (261 aa).

NAD(+) contacts are provided by residues Ser40, 59-60 (ER), Gly67, Val133, and 159-161 (HID). Residues Asp161 and His176 each contribute to the Fe cation site. NAD(+) contacts are provided by Ser179 and Met226. Arg236 lines the glycine pocket.

The protein belongs to the THI4 family. In terms of assembly, homooctamer; tetramer of dimers. Requires Fe(2+) as cofactor.

The enzyme catalyses hydrogen sulfide + glycine + NAD(+) = ADP-5-ethyl-4-methylthiazole-2-carboxylate + nicotinamide + 3 H2O + H(+). It functions in the pathway cofactor biosynthesis; thiamine diphosphate biosynthesis. Its function is as follows. Involved in the biosynthesis of the thiazole moiety of thiamine. Catalyzes the conversion of NAD and glycine to adenosine diphosphate 5-(2-hydroxyethyl)-4-methylthiazole-2-carboxylate (ADT), an adenylated thiazole intermediate, using free sulfide as a source of sulfur. The polypeptide is Thiamine thiazole synthase (Methanococcus maripaludis (strain C5 / ATCC BAA-1333)).